The primary structure comprises 388 residues: MQLSLLVGLVCFSAINAKIYFKEDFSDDDWEKRWIKSKHKDDFGKWEISHGKFYGDAVKDKGLKTTQDAKFYSIGAKFDKSFSNKGKSLVIQFSVKHEQDIDCGGGYVKLMASDVNLEDSHGETPYHIMFGPDICGPGTKKVHVIFHYKDRNHMIKKDIRCKDDVFTHLYTLIVNSDNTYEVQIDGEKAESGELEADWDFLPPKKIKDPDAKKPEDWDEREFIDDEDDKKPEDWDKPEHIPDPDAKKPEDWDDEMDGEWEPPMVDNPEYKGEWKPKQKKNPAYKGKWIHPEIEIPDYTPDDNLYVYDDIGAIGFDLWQVKSGTIFDDVIVTDSVEEAKKFGEKTLKITREGEKKKGKKTKKQKKKEKNEKIKKEKMKKRKRANRKKKK.

Positions 1–17 (MQLSLLVGLVCFSAINA) are cleaved as a signal peptide. The cysteines at positions 103 and 135 are disulfide-linked. Residues Y107, K109, Y126, and D133 each contribute to the an alpha-D-glucoside site. A run of 7 repeats spans residues 189–200 (AESGELEADWDF), 208–219 (DPDAKKPEDWDE), 225–236 (DEDDKKPEDWDK), 242–253 (DPDAKKPEDWDD), 257–267 (GEWEPPMVDNP), 271–281 (GEWKPKQKKNP), and 285–295 (GKWIHPEIEIP). The tract at residues 189–253 (AESGELEADW…DAKKPEDWDD (65 aa)) is 4 X approximate repeats. The interval 193–282 (ELEADWDFLP…WKPKQKKNPA (90 aa)) is disordered. Residues 205-215 (KIKDPDAKKPE) are compositionally biased toward basic and acidic residues. Residues 216–227 (DWDEREFIDDED) are compositionally biased toward acidic residues. Over residues 228–249 (DKKPEDWDKPEHIPDPDAKKPE) the composition is skewed to basic and acidic residues. The span at 250–259 (DWDDEMDGEW) shows a compositional bias: acidic residues. Residues 257 to 295 (GEWEPPMVDNPEYKGEWKPKQKKNPAYKGKWIHPEIEIP) are 3 X approximate repeats. An alpha-D-glucoside is bound at residue D315. The segment at 349-388 (REGEKKKGKKTKKQKKKEKNEKIKKEKMKKRKRANRKKKK) is disordered. 2 stretches are compositionally biased toward basic residues: residues 354 to 365 (KKGKKTKKQKKK) and 373 to 388 (KEKMKKRKRANRKKKK).

This sequence belongs to the calreticulin family.

It localises to the endoplasmic reticulum lumen. In terms of biological role, molecular calcium-binding chaperone promoting folding, oligomeric assembly and quality control in the ER via the calreticulin/calnexin cycle. This lectin may interact transiently with almost all of the monoglucosylated glycoproteins that are synthesized in the ER. This chain is Calreticulin (crt-1), found in Onchocerca volvulus.